A 146-amino-acid polypeptide reads, in one-letter code: Putative pre-16S rRNA nuclease (146 aa).

Belongs to the YqgF nuclease family.

It is found in the cytoplasm. Functionally, could be a nuclease involved in processing of the 5'-end of pre-16S rRNA. The chain is Putative pre-16S rRNA nuclease from Paraburkholderia phytofirmans (strain DSM 17436 / LMG 22146 / PsJN) (Burkholderia phytofirmans).